Consider the following 145-residue polypeptide: 3-hydroxyacyl-[acyl-carrier-protein] dehydratase FabZ (145 aa).

Histidine 47 is a catalytic residue.

The protein belongs to the thioester dehydratase family. FabZ subfamily.

It localises to the cytoplasm. It carries out the reaction a (3R)-hydroxyacyl-[ACP] = a (2E)-enoyl-[ACP] + H2O. Functionally, involved in unsaturated fatty acids biosynthesis. Catalyzes the dehydration of short chain beta-hydroxyacyl-ACPs and long chain saturated and unsaturated beta-hydroxyacyl-ACPs. The protein is 3-hydroxyacyl-[acyl-carrier-protein] dehydratase FabZ of Vesicomyosocius okutanii subsp. Calyptogena okutanii (strain HA).